An 837-amino-acid chain; its full sequence is GRIP1-associated protein 1 (837 aa).

A2 is subject to N-acetylalanine. The stretch at 4 to 158 (ALSEEEFQRM…ALQERYGKEA (155 aa)) forms a coiled coil. Disordered stretches follow at residues 161-180 (PSAVSEGQGDPPGDVLPISL), 555-577 (KGKEEELQNVRDQLQQAQEERDG), 647-666 (SEMNSPSRTQTGDSSSVSSF), and 677-702 (SSAIPARSLSSSPQAQPPRPAELSDE). Positions 204 to 637 (EQLQGLESSK…LQEILTNSKS (434 aa)) form a coiled coil. Residues 648–666 (EMNSPSRTQTGDSSSVSSF) show a composition bias toward polar residues. Phosphoserine is present on residues S651, S662, S664, S665, S684, S686, S687, and S688. Positions 678 to 690 (SAIPARSLSSSPQ) are enriched in low complexity. Coiled coils occupy residues 697–731 (AELSDEEVAELFQRLAETQQEKWMLEEKVKHLEVS) and 781–810 (DENLREMNKKLQNMLEEQLTKNMHLHKDME). Position 826 is a phosphoserine (S826).

In terms of assembly, interacts with GRIP1, GRIP2 and AMPA receptors. Interacts (via C-terminus) with MAPK8/JNK1 and with MAP3K1/MEKK1; the interaction promotes MAP3K1-mediated phosphorylation of MAPK8. Interacts (via N-terminus) with RAB4A (in GTP-bound form). Interacts (via C-terminus) with STX12. Post-translationally, proteolytically cleaved by caspase-3. A minor C-terminal proteolytic fragment of 30 kDa is produced. Proteolytic cleavage is required for JNK signaling activation. As to expression, expressed in the central nervous system; especially in neurons.

The protein resides in the early endosome membrane. The protein localises to the recycling endosome membrane. It is found in the cell projection. Its subcellular location is the axon. It localises to the dendrite. The protein resides in the synapse. Regulates the endosomal recycling back to the neuronal plasma membrane, possibly by connecting early and late recycling endosomal domains and promoting segregation of recycling endosomes from early endosomal membranes. Involved in the localization of recycling endosomes to dendritic spines, thereby playing a role in the maintenance of dendritic spine morphology. Required for the activity-induced AMPA receptor recycling to dendrite membranes and for long-term potentiation and synaptic plasticity. In terms of biological role, functions as a scaffold protein in neurons to facilitate MAP3K1/MEKK1-mediated activation of the JNK1 kinase by phosphorylation, possibly by bringing MAP3K1/MEKK1 and JNK1 in close proximity. The sequence is that of GRIP1-associated protein 1 (Gripap1) from Rattus norvegicus (Rat).